Here is a 352-residue protein sequence, read N- to C-terminus: C-X-C chemokine receptor type 4 (352 aa).

The interval 1–21 is important for chemokine binding and signaling; it reads MEGISIYTSDNYTEEIGSGDY. Topologically, residues 1–38 are extracellular; the sequence is MEGISIYTSDNYTEEIGSGDYDSIKEPCFREENAHFNR. Tyr-7 bears the Sulfotyrosine mark. Asn-11 carries an N-linked (GlcNAc...) asparagine glycan. Position 12 is a sulfotyrosine (Tyr-12). An O-linked (Xyl...) (chondroitin sulfate) serine glycan is attached at Ser-18. Tyr-21 carries the sulfotyrosine modification. Disulfide bonds link Cys-28–Cys-274 and Cys-109–Cys-186. The helical transmembrane segment at 39–63 threads the bilayer; sequence IFLPTIYSIIFLTGIVGNGLVILVM. Over 64–77 the chain is Cytoplasmic; the sequence is GYQKKLRSMTDKYR. Residues 78–99 traverse the membrane as a helical segment; the sequence is LHLSVADLLFVITLPFWAVDAV. The tract at residues 94-97 is chemokine binding; sequence WAVD. The Extracellular portion of the chain corresponds to 100–110; that stretch reads ANWYFGKFLCK. Residues 111 to 130 form a helical membrane-spanning segment; sequence AVHVIYTVNLYSSVLILAFI. A chemokine binding region spans residues 113–117; sequence HVIYT. Topologically, residues 131–154 are cytoplasmic; that stretch reads SLDRYLAIVHATNSQRPRKLLAEK. The Important for signaling motif lies at 133 to 135; the sequence is DRY. Residues 135–147 are involved in dimerization; when bound to chemokine; it reads YLAIVHATNSQRP. The chain crosses the membrane as a helical span at residues 155–174; that stretch reads VVYVGVWIPALLLTIPDFIF. At 175 to 195 the chain is on the extracellular side; sequence ANVSEADDRYICDRFYPNDLW. Positions 186 to 190 are chemokine binding, important for signaling; sequence CDRFY. Positions 191–210 are involved in dimerization; the sequence is PNDLWVVVFQFQHIMVGLIL. Residues 196–216 traverse the membrane as a helical segment; it reads VVVFQFQHIMVGLILPGIVIL. Topologically, residues 217–241 are cytoplasmic; that stretch reads SCYCIIISKLSHSKGHQKRKALKTT. A helical transmembrane segment spans residues 242–261; it reads VILILAFFACWLPYYIGISI. Residues 262-282 lie on the Extracellular side of the membrane; that stretch reads DSFILLEIIRQGCEFENTVHK. Residues 266–268 form an involved in dimerization region; sequence LLE. The chain crosses the membrane as a helical span at residues 283–302; it reads WISITEALAFFHCCLNPILY. Topologically, residues 303–352 are cytoplasmic; that stretch reads AFLGAKFKTSAQHALTSVSRGSSLKILSKGKRGGHSSVSTESESSSFHSS. A phosphoserine mark is found at Ser-319 and Ser-321. 2 positions are modified to phosphoserine; by PKC and GRK6: Ser-324 and Ser-325. A disordered region spans residues 329-352; the sequence is LSKGKRGGHSSVSTESESSSFHSS. Ser-330 carries the phosphoserine; by GRK6 modification. Lys-331 is covalently cross-linked (Glycyl lysine isopeptide (Lys-Gly) (interchain with G-Cter in ubiquitin)). Over residues 337 to 352 the composition is skewed to low complexity; sequence HSSVSTESESSSFHSS. Ser-339 bears the Phosphoserine; by GRK6 mark. Ser-348 and Ser-351 each carry phosphoserine.

Belongs to the G-protein coupled receptor 1 family. Monomer. Can form homodimers. Interacts with CD164. Interacts with ARRB2; the interaction is dependent on the C-terminal phosphorylation of CXCR4 and allows activation of MAPK1 and MAPK3. Interacts with ARR3; the interaction is dependent on the C-terminal phosphorylation of CXCR4 and modulates calcium mobilization. Interacts with RNF113A; the interaction, enhanced by CXCL12, promotes CXCR4 ubiquitination and subsequent degradation. Interacts (via the cytoplasmic C-terminal) with ITCH (via the WW domains I and II); the interaction, enhanced by CXCL12, promotes CXCR4 ubiquitination and leads to its degradation. Interacts with extracellular ubiquitin. Interacts with DBN1; this interaction is enhanced by antigenic stimulation. Following LPS binding, may form a complex with GDF5, HSP90AA1 and HSPA8. In terms of processing, phosphorylated on agonist stimulation. Rapidly phosphorylated on serine and threonine residues in the C-terminal. Phosphorylation at Ser-324 and Ser-325 leads to recruitment of ITCH, ubiquitination and protein degradation. Ubiquitinated after ligand binding, leading to its degradation. Ubiquitinated by ITCH at the cell membrane on agonist stimulation. The ubiquitin-dependent mechanism, endosomal sorting complex required for transport (ESCRT), then targets CXCR4 for lysosomal degradation. This process is dependent also on prior Ser-/Thr-phosphorylation in the C-terminal of CXCR4. Also binding of ARRB1 to STAM negatively regulates CXCR4 sorting to lysosomes though modulating ubiquitination of SFR5S. Post-translationally, sulfation is required for efficient binding of CXCL12/SDF-1alpha and promotes its dimerization. In terms of processing, O- and N-glycosylated. N-glycosylation can mask coreceptor function. The O-glycosylation chondroitin sulfate attachment does not affect interaction with CXCL12/SDF-1alpha nor its coreceptor activity.

The protein localises to the cell membrane. The protein resides in the cell junction. It is found in the early endosome. Its subcellular location is the late endosome. It localises to the lysosome. Functionally, receptor for the C-X-C chemokine CXCL12/SDF-1 that transduces a signal by increasing intracellular calcium ion levels and enhancing MAPK1/MAPK3 activation. Involved in the AKT signaling cascade. Plays a role in regulation of cell migration, e.g. during wound healing. Acts as a receptor for extracellular ubiquitin; leading to enhanced intracellular calcium ions and reduced cellular cAMP levels. Binds bacterial lipopolysaccharide (LPS) et mediates LPS-induced inflammatory response, including TNF secretion by monocytes. Involved in hematopoiesis and in cardiac ventricular septum formation. Also plays an essential role in vascularization of the gastrointestinal tract, probably by regulating vascular branching and/or remodeling processes in endothelial cells. Involved in cerebellar development. In the CNS, could mediate hippocampal-neuron survival. This is C-X-C chemokine receptor type 4 (CXCR4) from Callithrix jacchus (White-tufted-ear marmoset).